We begin with the raw amino-acid sequence, 914 residues long: PHD finger protein 14 (914 aa).

A disordered region spans residues 19–276 (DALDYDSSDD…EDSLLERPQT (258 aa)). Low complexity predominate over residues 53–68 (ESAAGSESDSDAAAAS). Over residues 90-102 (EKVKESFSEETSS) the composition is skewed to basic and acidic residues. Composition is skewed to acidic residues over residues 155–168 (ELNEMDDYDSEDDN) and 191–233 (GEED…DSEE). The PHD-type 1 zinc-finger motif lies at 285 to 346 (ILICCVCLGD…PWFCDACKNG (62 aa)). Cys288, Cys291, Cys305, Cys308, His313, Cys316, Cys340, Cys343, Cys351, Cys354, His371, Cys374, Cys407, Cys410, Cys424, Cys429, His434, Cys437, Cys461, and His464 together coordinate Zn(2+). The C2HC pre-PHD-type zinc-finger motif lies at 348 to 381 (SPSCELCPSQDGIFKETDAGRWVHVVCALYVPGV). The PHD-type 2 zinc-finger motif lies at 405–465 (KECSLCEDTR…PFFAYCKQHA (61 aa)). The stretch at 596-644 (MIQIQDNIVEQKNLKDKLESEQEKLHMEYDKLCESLEDLQNVNGQLRTE) forms a coiled coil. A PHD-type 3 zinc finger spans residues 692 to 746 (LYSCGICKKNQDQHLLLLCDTCKLHYHLGCLDPPLTRMPKKTKNSYWQCSECDQA). Residues Cys695, Cys698, Cys710, Cys713, His718, Cys721, Cys740, and Cys743 each coordinate Zn(2+). The disordered stretch occupies residues 777-838 (PQEMSPEPKK…PKADDTRTEC (62 aa)). The span at 792 to 802 (TRTRGQKRKRM) shows a compositional bias: basic residues. A compositionally biased stretch (basic and acidic residues) spans 803–817 (SICEEEKMEEPLPRE). The PHD-type 4 zinc-finger motif lies at 835 to 888 (RTECTTCKGPGDNENLVRCDECRLCYHFGCLDPPLKKSPKQTGYGWICQECDTS). Zn(2+) is bound by residues Cys838, Cys841, Cys853, Cys856, His861, Cys864, Cys882, and Cys885. Positions 887 to 914 (TSSSKEEEAQEVEEESVNEETAEQEIPD) are disordered. Over residues 894-914 (EAQEVEEESVNEETAEQEIPD) the composition is skewed to acidic residues.

In terms of assembly, interacts with histone H3.

It is found in the nucleus. In terms of biological role, histone-binding protein. Binds preferentially to unmodified histone H3 but can also bind to a lesser extent to histone H3 trimethylated at 'Lys-9' (H3K9me3) as well as to histone H3 monomethylated at 'Lys-27' (H3K27ac) and trimethylated at 'Lys-27' (H3K27me3). Represses PDGFRA expression, thus playing a role in regulation of mesenchymal cell proliferation. The sequence is that of PHD finger protein 14 from Danio rerio (Zebrafish).